The chain runs to 454 residues: Chaperone SurA (454 aa).

Residues 1–28 (MKISSFRKGRWLGALALFAVVCWSMADA) form the signal peptide. PpiC domains follow at residues 177 to 278 (DREY…KMLA) and 287 to 386 (LTKT…QVLE). The disordered stretch occupies residues 431–454 (LDETPASPGEDAPAGEDSPETFMR). Positions 443 to 454 (PAGEDSPETFMR) are enriched in acidic residues.

Its subcellular location is the periplasm. It catalyses the reaction [protein]-peptidylproline (omega=180) = [protein]-peptidylproline (omega=0). In terms of biological role, chaperone involved in the correct folding and assembly of outer membrane proteins. Recognizes specific patterns of aromatic residues and the orientation of their side chains, which are found more frequently in integral outer membrane proteins. May act in both early periplasmic and late outer membrane-associated steps of protein maturation. This Methylococcus capsulatus (strain ATCC 33009 / NCIMB 11132 / Bath) protein is Chaperone SurA.